Here is a 662-residue protein sequence, read N- to C-terminus: Fructose-1,6-bisphosphatase class 3 (662 aa).

It belongs to the FBPase class 3 family. Mn(2+) is required as a cofactor.

The catalysed reaction is beta-D-fructose 1,6-bisphosphate + H2O = beta-D-fructose 6-phosphate + phosphate. Its pathway is carbohydrate biosynthesis; gluconeogenesis. The protein is Fructose-1,6-bisphosphatase class 3 of Clostridium tetani (strain Massachusetts / E88).